A 670-amino-acid polypeptide reads, in one-letter code: MSERTEQESYTDKIDEDEILAGLSAEELKQLQSEMDDIAPDERVPVGLRQKDASHEMTVRDCTEPESEEEIDEDEILAGLSAEELKQLQSEMEEIAPDERVPVGMRQRDQTDKPPTGSFDHRSLVEYLYWEKESKRMLEEERVPTTLLPSQKTNEEHEAKNEDKVEELELVYEEIVEEVEGGQGDAVVDEVIEEVIMEVEEEDKVCDKPVKTDLDATDPTVTSEDGLQRPSESADANVEAKTDQSGLDTETKVNEEKKEDSTEPAPSSYENWVPEKEERVISKLKIPKLALGGNTFVKKTARPSGNETNLESTLDKIRNNNPSVTDVNLNNIENIPKEMLLDYVNSLKKNRHVKTFSIANTGADENVAFTLANMLKENRSITTLNIESNFITGKGIVAIIRCLQFNETLTELRFHNQRHMLGHHAEMEVSRLLKANNTLLKMGYHFELPGPRMVVTNLLTRNLDRQRQQRMEEQKLQQMKEQRKVMEMYEDSLNLPPGMLEMLGGYIPLSLLQNCQNGAEDIPEDSPEPSPQPSPPHQLCKTQHLAPQQHPPNLSTGNLFEEVQLKKTPKRRDPLLEWNQCDERKDGRPNVHLRSVPKKRSIAREGPVDERANLKDMIKTLKPVPRRREPPKVDLTPRDHLLSEIRQSNVAYLKAVPLPKILESQETSLF.

4 disordered regions span residues 34–72 (EMDD…EEID), 94–120 (EIAP…GSFD), 139–165 (EEER…EDKV), and 202–274 (EDKV…NWVP). 5 stretches are compositionally biased toward basic and acidic residues: residues 40–63 (PDER…RDCT), 97–112 (PDER…DQTD), 153–163 (TNEEHEAKNED), 205–214 (VCDKPVKTDL), and 249–261 (TETK…KEDS). Residues 150-183 (SQKTNEEHEAKNEDKVEELELVYEEIVEEVEGGQ) adopt a coiled-coil conformation. A coiled-coil region spans residues 464–494 (DRQRQQRMEEQKLQQMKEQRKVMEMYEDSLN). The segment at 517–556 (NGAEDIPEDSPEPSPQPSPPHQLCKTQHLAPQQHPPNLST) is disordered. The region spanning 637–656 (PRDHLLSEIRQSNVAYLKAV) is the WH2 domain.

Belongs to the tropomodulin family. In terms of tissue distribution, expressed in muscle (at protein level).

The protein resides in the cytoplasm. It localises to the myofibril. The protein localises to the sarcomere. It is found in the a band. Its subcellular location is the m line. The protein resides in the cytoskeleton. In terms of biological role, essential for the organization of sarcomeric thin filaments in skeletal muscle. The chain is Leiomodin-3 from Danio rerio (Zebrafish).